The chain runs to 409 residues: Histone deacetylase 7 (409 aa).

The segment at 11 to 324 (RVSYFYEPMI…WCYETAIAVG (314 aa)) is histone deacetylase. The active-site Proton donor/acceptor is the His148. Asp267 contributes to the Zn(2+) binding site. A disordered region spans residues 383-409 (PFQDTPSSSQATEAAEVDMEKRNDPRI). The segment covering 384 to 394 (FQDTPSSSQAT) has biased composition (polar residues). Over residues 400-409 (DMEKRNDPRI) the composition is skewed to basic and acidic residues.

It belongs to the histone deacetylase family. HD type 1 subfamily. Zn(2+) serves as cofactor. In terms of tissue distribution, low expression in flowers.

Its subcellular location is the nucleus. It carries out the reaction N(6)-acetyl-L-lysyl-[histone] + H2O = L-lysyl-[histone] + acetate. In terms of biological role, responsible for the deacetylation of lysine residues on the N-terminal part of the core histones (H2A, H2B, H3 and H4). Histone deacetylation gives a tag for epigenetic repression and plays an important role in transcriptional regulation, cell cycle progression and developmental events. May be involved in flowering induction. Histone deacetylases act via the formation of large multiprotein complexes. This is Histone deacetylase 7 (HDA7) from Arabidopsis thaliana (Mouse-ear cress).